The sequence spans 192 residues: Leucine-rich repeat-containing protein 51 (192 aa).

LRR repeat units follow at residues 49–71, 80–101, and 103–124; these read SLTQSLWLNNNVLNDLKDFNQVV, NLAWIDLSFNDLTTIDPVLTTF, and NLSVLYLHGNSIHRLGEVNKLA. The region spanning 137–175 is the LRRCT domain; it reads NPIEEEKGYRQYVLCNLPRITTFDFSGVTKADRSTAEVW.

The protein localises to the cytoplasm. The chain is Leucine-rich repeat-containing protein 51 from Rattus norvegicus (Rat).